The sequence spans 307 residues: MSLCQGSAMQKLIAKTEGPMAGVGRVGGFNRPSGGLGQSSAEQQLQARAGERASQNRFMAVLEPQRELGGRMARGDGLQADWVRQFSSMQVEDPLAFSAEYQRAYAGYEQRQAARPAARVLGYGGSMFMPTMPQQQLQQQVAPQQTAQAALQEAELERYLEREFDVLEGELAPPEVPEALSAPLLDHEQLGFQESAKAIYATLSAPIHKDKFGASKFMGLMRQVSTGDVTLSKSESGYTGLHMTAGGEAVGAEYRAVTDEVVQVPEVAAALPLAGEERSLASQMEDLLNKVDIAGLSSNEAAMRILS.

A Glycyl cysteine thioester (Cys-Gly) (interchain with G-Cter in ubiquitin) cross-link involves residue cysteine 4. Residues 23–52 (VGRVGGFNRPSGGLGQSSAEQQLQARAGER) are disordered.

It belongs to the peroxin-21 family. As to quaternary structure, interacts with PEX7. In terms of processing, monoubiquitinated at Cys-4; acts as a signal for PEX21 extraction and is required for proper export from peroxisomes and recycling.

The protein localises to the cytoplasm. The protein resides in the cytosol. Its subcellular location is the peroxisome. Mediates peroxisomal import of proteins containing a C-terminal PTS2-type peroxisomal targeting signal via its interaction with PEX7. Interaction with PEX7 only takes place when PEX7 is associated with cargo proteins containing a PTS2 peroxisomal targeting signal. PEX7 along with PTS2-containing cargo proteins are then translocated through the PEX13-PEX14 docking complex together with PEX21. The protein is Peroxisomal protein PEX21 (PEX21) of Eremothecium gossypii (strain ATCC 10895 / CBS 109.51 / FGSC 9923 / NRRL Y-1056) (Yeast).